The sequence spans 250 residues: Small ribosomal subunit protein uS3 (250 aa).

The KH type-2 domain occupies Ile39–Ile109. Basic and acidic residues predominate over residues Ile225 to Pro239. Residues Ile225 to Ser250 are disordered. The segment covering Arg240–Ser250 has biased composition (basic residues).

The protein belongs to the universal ribosomal protein uS3 family. Part of the 30S ribosomal subunit. Forms a tight complex with proteins S10 and S14.

Binds the lower part of the 30S subunit head. Binds mRNA in the 70S ribosome, positioning it for translation. This Chlorobium phaeobacteroides (strain DSM 266 / SMG 266 / 2430) protein is Small ribosomal subunit protein uS3.